Reading from the N-terminus, the 252-residue chain is Pimeloyl-[acyl-carrier protein] methyl ester esterase (252 aa).

In terms of domain architecture, AB hydrolase-1 spans 15–239 (LVMLHGWAMH…FPHCGHAPFL (225 aa)). Substrate contacts are provided by residues tryptophan 21, 81–82 (SL), and 143–147 (FLTLQ). The active-site Nucleophile is serine 81. Catalysis depends on residues aspartate 207 and histidine 235. Histidine 235 serves as a coordination point for substrate.

The protein belongs to the AB hydrolase superfamily. Carboxylesterase BioH family. Monomer.

It localises to the cytoplasm. It catalyses the reaction 6-carboxyhexanoyl-[ACP] methyl ester + H2O = 6-carboxyhexanoyl-[ACP] + methanol + H(+). Its pathway is cofactor biosynthesis; biotin biosynthesis. The physiological role of BioH is to remove the methyl group introduced by BioC when the pimeloyl moiety is complete. It allows to synthesize pimeloyl-ACP via the fatty acid synthetic pathway through the hydrolysis of the ester bonds of pimeloyl-ACP esters. This Nitrosomonas europaea (strain ATCC 19718 / CIP 103999 / KCTC 2705 / NBRC 14298) protein is Pimeloyl-[acyl-carrier protein] methyl ester esterase.